We begin with the raw amino-acid sequence, 561 residues long: Dihydroxy-acid dehydratase (561 aa).

Residue Asp80 coordinates Mg(2+). Cys121 is a [2Fe-2S] cluster binding site. 2 residues coordinate Mg(2+): Asp122 and Lys123. Lys123 carries the N6-carboxylysine modification. Cys194 serves as a coordination point for [2Fe-2S] cluster. Glu448 serves as a coordination point for Mg(2+). Residue Ser474 is the Proton acceptor of the active site.

It belongs to the IlvD/Edd family. As to quaternary structure, homodimer. Requires [2Fe-2S] cluster as cofactor. The cofactor is Mg(2+).

It catalyses the reaction (2R)-2,3-dihydroxy-3-methylbutanoate = 3-methyl-2-oxobutanoate + H2O. It carries out the reaction (2R,3R)-2,3-dihydroxy-3-methylpentanoate = (S)-3-methyl-2-oxopentanoate + H2O. It functions in the pathway amino-acid biosynthesis; L-isoleucine biosynthesis; L-isoleucine from 2-oxobutanoate: step 3/4. The protein operates within amino-acid biosynthesis; L-valine biosynthesis; L-valine from pyruvate: step 3/4. Functions in the biosynthesis of branched-chain amino acids. Catalyzes the dehydration of (2R,3R)-2,3-dihydroxy-3-methylpentanoate (2,3-dihydroxy-3-methylvalerate) into 2-oxo-3-methylpentanoate (2-oxo-3-methylvalerate) and of (2R)-2,3-dihydroxy-3-methylbutanoate (2,3-dihydroxyisovalerate) into 2-oxo-3-methylbutanoate (2-oxoisovalerate), the penultimate precursor to L-isoleucine and L-valine, respectively. In Anaeromyxobacter sp. (strain Fw109-5), this protein is Dihydroxy-acid dehydratase.